The chain runs to 191 residues: Molybdenum cofactor guanylyltransferase (191 aa).

GTP-binding positions include 11 to 13 (LCG), K23, D66, and D97. Position 97 (D97) interacts with Mg(2+).

This sequence belongs to the MobA family. In terms of assembly, monomer. Mg(2+) serves as cofactor.

The protein localises to the cytoplasm. It catalyses the reaction Mo-molybdopterin + GTP + H(+) = Mo-molybdopterin guanine dinucleotide + diphosphate. Its function is as follows. Transfers a GMP moiety from GTP to Mo-molybdopterin (Mo-MPT) cofactor (Moco or molybdenum cofactor) to form Mo-molybdopterin guanine dinucleotide (Mo-MGD) cofactor. This is Molybdenum cofactor guanylyltransferase from Campylobacter jejuni subsp. doylei (strain ATCC BAA-1458 / RM4099 / 269.97).